Here is a 260-residue protein sequence, read N- to C-terminus: Ubiquinone/menaquinone biosynthesis C-methyltransferase UbiE (260 aa).

S-adenosyl-L-methionine contacts are provided by residues Thr83, Asp104, and 132–133 (NA).

Belongs to the class I-like SAM-binding methyltransferase superfamily. MenG/UbiE family.

It catalyses the reaction a 2-demethylmenaquinol + S-adenosyl-L-methionine = a menaquinol + S-adenosyl-L-homocysteine + H(+). It carries out the reaction a 2-methoxy-6-(all-trans-polyprenyl)benzene-1,4-diol + S-adenosyl-L-methionine = a 5-methoxy-2-methyl-3-(all-trans-polyprenyl)benzene-1,4-diol + S-adenosyl-L-homocysteine + H(+). It participates in quinol/quinone metabolism; menaquinone biosynthesis; menaquinol from 1,4-dihydroxy-2-naphthoate: step 2/2. Its pathway is cofactor biosynthesis; ubiquinone biosynthesis. Its function is as follows. Methyltransferase required for the conversion of demethylmenaquinol (DMKH2) to menaquinol (MKH2) and the conversion of 2-polyprenyl-6-methoxy-1,4-benzoquinol (DDMQH2) to 2-polyprenyl-3-methyl-6-methoxy-1,4-benzoquinol (DMQH2). This chain is Ubiquinone/menaquinone biosynthesis C-methyltransferase UbiE, found in Bartonella tribocorum (strain CIP 105476 / IBS 506).